The chain runs to 162 residues: NADPH-dependent 7-cyano-7-deazaguanine reductase (162 aa).

C53 functions as the Thioimide intermediate in the catalytic mechanism. D60 (proton donor) is an active-site residue. Substrate is bound by residues 75–77 (VES) and 94–95 (HE).

The protein belongs to the GTP cyclohydrolase I family. QueF type 1 subfamily.

The protein localises to the cytoplasm. It catalyses the reaction 7-aminomethyl-7-carbaguanine + 2 NADP(+) = 7-cyano-7-deazaguanine + 2 NADPH + 3 H(+). The protein operates within tRNA modification; tRNA-queuosine biosynthesis. Catalyzes the NADPH-dependent reduction of 7-cyano-7-deazaguanine (preQ0) to 7-aminomethyl-7-deazaguanine (preQ1). This is NADPH-dependent 7-cyano-7-deazaguanine reductase from Exiguobacterium sibiricum (strain DSM 17290 / CCUG 55495 / CIP 109462 / JCM 13490 / 255-15).